Here is a 396-residue protein sequence, read N- to C-terminus: Jacalin-related lectin 45 (396 aa).

3 consecutive Jacalin-type lectin domains span residues 3 to 138 (KKVT…KTSH), 144 to 264 (QFRM…NFAV), and 270 to 392 (VKKL…YVKP).

Belongs to the jacalin lectin family.

This is Jacalin-related lectin 45 (JAL45) from Arabidopsis thaliana (Mouse-ear cress).